Reading from the N-terminus, the 564-residue chain is Membrane protein insertase YidC (564 aa).

The helical transmembrane segment at 7 to 24 (VLWVVFSFSLLMLWDNYN) threads the bilayer. Positions 43–60 (KPAAATDDGKTAAAPTAD) are enriched in low complexity. The interval 43 to 76 (KPAAATDDGKTAAAPTADVPTSSAHAANATGVPD) is disordered. A run of 6 helical transmembrane segments spans residues 293 to 313 (LATN…APGA), 341 to 361 (VKDY…MIQI), 364 to 384 (LLGN…LAFF), 438 to 458 (MPIV…LASV), 483 to 503 (IGSF…SMFI), and 524 to 544 (PIAF…YWVV).

Belongs to the OXA1/ALB3/YidC family. Type 1 subfamily. In terms of assembly, interacts with the Sec translocase complex via SecD. Specifically interacts with transmembrane segments of nascent integral membrane proteins during membrane integration.

It localises to the cell inner membrane. In terms of biological role, required for the insertion and/or proper folding and/or complex formation of integral membrane proteins into the membrane. Involved in integration of membrane proteins that insert both dependently and independently of the Sec translocase complex, as well as at least some lipoproteins. Aids folding of multispanning membrane proteins. The protein is Membrane protein insertase YidC of Janthinobacterium sp. (strain Marseille) (Minibacterium massiliensis).